The sequence spans 164 residues: Phosphopantetheine adenylyltransferase (164 aa).

S9 lines the substrate pocket. ATP contacts are provided by residues 9-10 (SF) and H17. The substrate site is built by K41, L74, and R88. Residues 89–91 (GIR), E99, and 124–130 (YAEVSST) each bind ATP.

Belongs to the bacterial CoaD family. In terms of assembly, homohexamer. It depends on Mg(2+) as a cofactor.

Its subcellular location is the cytoplasm. It catalyses the reaction (R)-4'-phosphopantetheine + ATP + H(+) = 3'-dephospho-CoA + diphosphate. It functions in the pathway cofactor biosynthesis; coenzyme A biosynthesis; CoA from (R)-pantothenate: step 4/5. Reversibly transfers an adenylyl group from ATP to 4'-phosphopantetheine, yielding dephospho-CoA (dPCoA) and pyrophosphate. This chain is Phosphopantetheine adenylyltransferase, found in Chromobacterium violaceum (strain ATCC 12472 / DSM 30191 / JCM 1249 / CCUG 213 / NBRC 12614 / NCIMB 9131 / NCTC 9757 / MK).